Here is a 720-residue protein sequence, read N- to C-terminus: DNA ligase (720 aa).

Residues 57 to 61 (DAEYD), 106 to 107 (SL), and Glu-140 each bind NAD(+). The active-site N6-AMP-lysine intermediate is Lys-142. Residues Arg-163, Glu-200, Lys-316, and Lys-340 each contribute to the NAD(+) site. Residues Cys-434, Cys-437, Cys-458, and Cys-464 each contribute to the Zn(2+) site. The region spanning 643–720 (AAASPVSGKT…TEDEWFELVG (78 aa)) is the BRCT domain.

It belongs to the NAD-dependent DNA ligase family. LigA subfamily. Requires Mg(2+) as cofactor. Mn(2+) is required as a cofactor.

It catalyses the reaction NAD(+) + (deoxyribonucleotide)n-3'-hydroxyl + 5'-phospho-(deoxyribonucleotide)m = (deoxyribonucleotide)n+m + AMP + beta-nicotinamide D-nucleotide.. In terms of biological role, DNA ligase that catalyzes the formation of phosphodiester linkages between 5'-phosphoryl and 3'-hydroxyl groups in double-stranded DNA using NAD as a coenzyme and as the energy source for the reaction. It is essential for DNA replication and repair of damaged DNA. This is DNA ligase from Xanthobacter autotrophicus (strain ATCC BAA-1158 / Py2).